A 61-amino-acid chain; its full sequence is Putative MSV199 domain-containing protein 200R (61 aa).

The polypeptide is Putative MSV199 domain-containing protein 200R (Invertebrate iridescent virus 6 (IIV-6)).